The sequence spans 192 residues: Fe/S biogenesis protein NfuA (192 aa).

[4Fe-4S] cluster is bound by residues cysteine 149 and cysteine 152.

The protein belongs to the NfuA family. In terms of assembly, homodimer. Requires [4Fe-4S] cluster as cofactor.

Functionally, involved in iron-sulfur cluster biogenesis. Binds a 4Fe-4S cluster, can transfer this cluster to apoproteins, and thereby intervenes in the maturation of Fe/S proteins. Could also act as a scaffold/chaperone for damaged Fe/S proteins. This chain is Fe/S biogenesis protein NfuA, found in Proteus mirabilis (strain HI4320).